Consider the following 207-residue polypeptide: Ciliary microtubule-associated protein 3 (207 aa).

As to quaternary structure, interacts with proteins involved in ciliary transport, including ARL13B, CETN1, KIF3A, RAB6A, RAB8A, TUBB1 and TUBG1. Interacts with AURKA. In terms of tissue distribution, expressed in tissues rich in ciliated cells, such as lung, kidney, vas deferens and testis. Both isoforms 1 and 2 are expressed in testis.

It is found in the golgi apparatus. The protein localises to the golgi stack. It localises to the trans-Golgi network. The protein resides in the nucleus. Its subcellular location is the cytoplasm. It is found in the cytoplasmic vesicle. Its function is as follows. During primary cilia disassembly, involved in cilia disassembly. Required specifically to control cilia retraction as well as the liberation and duplication of the basal body/centrosome. May act by stimulating AURKA activity at the basal body in a cell cycle-dependent manner. The polypeptide is Ciliary microtubule-associated protein 3 (Cimap3) (Mus musculus (Mouse)).